The chain runs to 130 residues: Small ribosomal subunit protein uS9 (130 aa).

This sequence belongs to the universal ribosomal protein uS9 family.

The polypeptide is Small ribosomal subunit protein uS9 (Cupriavidus metallidurans (strain ATCC 43123 / DSM 2839 / NBRC 102507 / CH34) (Ralstonia metallidurans)).